Consider the following 290-residue polypeptide: Putative heme oxygenase 3 (290 aa).

Residues 1–12 (MSSEVETAEAVD) are compositionally biased toward acidic residues. Residues 1–33 (MSSEVETAEAVDESEKNSMASEKENHSKIADFS) are disordered. Basic and acidic residues predominate over residues 13-33 (ESEKNSMASEKENHSKIADFS). HRM repeat units lie at residues 238-243 (KCPFNA) and 255-260 (NCPFQM).

Belongs to the heme oxygenase family. Found in the spleen, liver, thymus, prostate, heart, kidney, brain and testis.

It catalyses the reaction heme b + 3 reduced [NADPH--hemoprotein reductase] + 3 O2 = biliverdin IXalpha + CO + Fe(2+) + 3 oxidized [NADPH--hemoprotein reductase] + 3 H2O + H(+). Functionally, heme oxygenase cleaves the heme ring at the alpha methene bridge to form biliverdin. Biliverdin is subsequently converted to bilirubin by biliverdin reductase. Heme oxygenase 3 could be implicated in some heme-dependent regulatory role in the cell. This is Putative heme oxygenase 3 (Hmox3) from Rattus norvegicus (Rat).